Consider the following 324-residue polypeptide: Short-chain dehydrogenase/reductase iacJ (324 aa).

NADP(+)-binding residues include Ile-42, Lys-66, Asp-93, Asn-120, Tyr-204, Lys-208, and Thr-239. Tyr-204 serves as the catalytic Proton donor. Residue Lys-208 is the Lowers pKa of active site Tyr of the active site.

The protein belongs to the short-chain dehydrogenases/reductases (SDR) family.

It functions in the pathway secondary metabolite biosynthesis. Its function is as follows. Short-chain dehydrogenase/reductase; part of the gene cluster that mediates the biosynthesis of iso-A82775C, a enylepoxycyclohexane and biosynthetic precursor of the chloropestolide anticancer natural products. Within the cluster, the prenyltransferase iacE prenylates siccayne to generate pestalodiol E, using dimethylallyl diphosphate (DMAPP) as cosubstrate. The probable oxidoreductase iacF is then involved in the epoxidation of pestalodiol F to pestalodiol F, which is further converted to pestalofone A by the short-chain dehydrogenase/reductase iacG. Iso-A82775C is subsequently generated from pestalofone A by the short-chain dehydrogenase/reductase iacC. Iso-A82775C is further condensed with maldoxin via a Diels-Alder reaction to produce the anticancer natural products chloropestolides A to E. In Pestalotiopsis fici (strain W106-1 / CGMCC3.15140), this protein is Short-chain dehydrogenase/reductase iacJ.